The chain runs to 147 residues: Hemoglobin subunit beta (147 aa).

At Val-2 the chain carries N-acetylvaline. The Globin domain occupies 3–147 (NLTSDEKTAV…VANALAHKYH (145 aa)). Ser-45 carries the post-translational modification Phosphoserine. Lys-60 bears the N6-acetyllysine mark. A heme b-binding site is contributed by His-64. The residue at position 83 (Lys-83) is an N6-acetyllysine. His-93 lines the heme b pocket. Position 94 is an S-nitrosocysteine (Cys-94). Lys-145 bears the N6-acetyllysine mark.

This sequence belongs to the globin family. In terms of assembly, heterotetramer of two alpha chains and two beta chains. As to expression, red blood cells.

Functionally, involved in oxygen transport from the lung to the various peripheral tissues. The chain is Hemoglobin subunit beta (HBB) from Dasypus novemcinctus (Nine-banded armadillo).